Here is a 526-residue protein sequence, read N- to C-terminus: Glucose-6-phosphate isomerase (526 aa).

Catalysis depends on Glu320, which acts as the Proton donor. Residues His349 and Lys453 contribute to the active site.

It belongs to the GPI family.

It localises to the cytoplasm. It catalyses the reaction alpha-D-glucose 6-phosphate = beta-D-fructose 6-phosphate. It functions in the pathway carbohydrate biosynthesis; gluconeogenesis. The protein operates within carbohydrate degradation; glycolysis; D-glyceraldehyde 3-phosphate and glycerone phosphate from D-glucose: step 2/4. Its function is as follows. Catalyzes the reversible isomerization of glucose-6-phosphate to fructose-6-phosphate. The polypeptide is Glucose-6-phosphate isomerase (Rippkaea orientalis (strain PCC 8801 / RF-1) (Cyanothece sp. (strain PCC 8801))).